The following is a 137-amino-acid chain: Peptide methionine sulfoxide reductase MsrB (137 aa).

Positions 7–129 (VDDLKENLSE…NSASLSFTDE (123 aa)) constitute a MsrB domain. The Zn(2+) site is built by C46, C49, C95, and C98. The active-site Nucleophile is C118.

Belongs to the MsrB Met sulfoxide reductase family. The cofactor is Zn(2+).

The catalysed reaction is L-methionyl-[protein] + [thioredoxin]-disulfide + H2O = L-methionyl-(R)-S-oxide-[protein] + [thioredoxin]-dithiol. This chain is Peptide methionine sulfoxide reductase MsrB, found in Escherichia fergusonii (strain ATCC 35469 / DSM 13698 / CCUG 18766 / IAM 14443 / JCM 21226 / LMG 7866 / NBRC 102419 / NCTC 12128 / CDC 0568-73).